Consider the following 389-residue polypeptide: Curcumin synthase 1 (389 aa).

Cysteine 164 is a catalytic residue.

It belongs to the thiolase-like superfamily. Chalcone/stilbene synthases family. As to quaternary structure, homodimer. Expressed in both the leaf and rhizome, with higher expression in the rhizome.

The catalysed reaction is (E)-feruloylacetyl-CoA + (E)-feruloyl-CoA + H2O = curcumin + CO2 + 2 CoA. It participates in secondary metabolite biosynthesis; flavonoid biosynthesis. Functionally, catalyzes the synthesis of curcumin by condensing feruloyl-CoA with a diketide-CoA in the curcuminoid biosynthesis. The chain is Curcumin synthase 1 (CURS1) from Curcuma longa (Turmeric).